The chain runs to 156 residues: Small ribosomal subunit protein uS7 (156 aa).

The protein belongs to the universal ribosomal protein uS7 family. In terms of assembly, part of the 30S ribosomal subunit. Contacts proteins S9 and S11.

Its function is as follows. One of the primary rRNA binding proteins, it binds directly to 16S rRNA where it nucleates assembly of the head domain of the 30S subunit. Is located at the subunit interface close to the decoding center, probably blocks exit of the E-site tRNA. This is Small ribosomal subunit protein uS7 from Lactobacillus acidophilus (strain ATCC 700396 / NCK56 / N2 / NCFM).